Here is a 493-residue protein sequence, read N- to C-terminus: Galactose-1-phosphate uridylyltransferase (493 aa).

Belongs to the galactose-1-phosphate uridylyltransferase type 2 family.

It localises to the cytoplasm. The catalysed reaction is alpha-D-galactose 1-phosphate + UDP-alpha-D-glucose = alpha-D-glucose 1-phosphate + UDP-alpha-D-galactose. It participates in carbohydrate metabolism; galactose metabolism. In Lactococcus lactis subsp. lactis (strain IL1403) (Streptococcus lactis), this protein is Galactose-1-phosphate uridylyltransferase (galT).